The primary structure comprises 366 residues: Protein sigma-NS (366 aa).

The tract at residues 1–11 is important for ssRNA-binding and formation of complexes; the sequence is MASSLRAAISK.

The protein belongs to the orthoreovirus sigma-NS protein family. In terms of assembly, homooligomer; in presence of RNA. Interacts with protein mu-NS; this interaction allows the localization of sigma-NS to the viral factories. Interacts with host G3BP1 (via C-terminus); this interaction induces the relocalization of G3BP1 and other SG proteins to the viral factories periphery.

It is found in the host cytoplasm. Its function is as follows. Protein that binds to ssRNA and participates with protein mu-NS in forming the matrix of viral factories, which are large inclusions in the host cytoplasm where replication intermediates are assembled and viral RNA replication takes place. Plays a role in the inhibition of the integrated stress response (ISR) to escape from host cell translational shutoff. Participates in the disruption of stress granules (SG) through its association with host G3BP1 and mu-NS. In Mammalia (T3D), this protein is Protein sigma-NS (S3).